Consider the following 351-residue polypeptide: Peptidyl-Lys metalloendopeptidase (351 aa).

An N-terminal signal peptide occupies residues 1-22 (MFSLSSRFFLYSLCLSAVAVSA). The propeptide occupies 23-183 (APGLSLSLSG…VARRSNLGKR (161 aa)). Cystine bridges form between Cys189–Cys259 and Cys261–Cys281. Zn(2+) is bound at residue His301. Glu302 is a catalytic residue. Positions 305 and 314 each coordinate Zn(2+).

This sequence belongs to the peptidase M35 family. Requires Zn(2+) as cofactor.

Its subcellular location is the secreted. It carries out the reaction Preferential cleavage in proteins: -Xaa-|-Lys- (in which Xaa may be Pro).. With respect to regulation, inhibited by chelating agents such as imidazole, alpha,alpha'-bipyridine, and 1,10-phenanthroline. This chain is Peptidyl-Lys metalloendopeptidase (MEP), found in Armillaria mellea (Honey mushroom).